Consider the following 227-residue polypeptide: MFHVEPNGGEPAEWDEQAAARQVFGERFDIAERYYKSLASDGVERGLIGPREVPRLWERHLLNCAVVGELIAEGESVVDVGSGAGLPGIPLAIARPDLRITLVEPLLRRSVYLAEFVESNGLDVLVVRGRAEESGVVKEAGGADVVTSRAVAPLEKLAKWSLPLIHEHGRMLALKGSSAAEEISRDRASLTRLGAGKLDIVECGVGLLPVPTVVVRAERVPKRRQRR.

Residues G81, L86, A131 to E132, and R149 contribute to the S-adenosyl-L-methionine site.

The protein belongs to the methyltransferase superfamily. RNA methyltransferase RsmG family.

The protein localises to the cytoplasm. Functionally, specifically methylates the N7 position of guanine in position 518 of 16S rRNA. This chain is Ribosomal RNA small subunit methyltransferase G, found in Rhodococcus jostii (strain RHA1).